The primary structure comprises 198 residues: Holliday junction branch migration complex subunit RuvA (198 aa).

Residues 1–63 are domain I; it reads MYDYIKGQLT…EDAHLLFGFH (63 aa). Residues 64–142 form a domain II region; that stretch reads TEDEKDVFLK…EAPQETGHTK (79 aa). A flexible linker region spans residues 143-147; the sequence is ARSNK. Positions 148–198 are domain III; that stretch reads AGNTQLDEAIEALLALGYTATELKKIRAFFEGTSETAEQYIKSALKLLMKG.

Belongs to the RuvA family. Homotetramer. Forms an RuvA(8)-RuvB(12)-Holliday junction (HJ) complex. HJ DNA is sandwiched between 2 RuvA tetramers; dsDNA enters through RuvA and exits via RuvB. An RuvB hexamer assembles on each DNA strand where it exits the tetramer. Each RuvB hexamer is contacted by two RuvA subunits (via domain III) on 2 adjacent RuvB subunits; this complex drives branch migration. In the full resolvosome a probable DNA-RuvA(4)-RuvB(12)-RuvC(2) complex forms which resolves the HJ.

The protein localises to the cytoplasm. Its function is as follows. The RuvA-RuvB-RuvC complex processes Holliday junction (HJ) DNA during genetic recombination and DNA repair, while the RuvA-RuvB complex plays an important role in the rescue of blocked DNA replication forks via replication fork reversal (RFR). RuvA specifically binds to HJ cruciform DNA, conferring on it an open structure. The RuvB hexamer acts as an ATP-dependent pump, pulling dsDNA into and through the RuvAB complex. HJ branch migration allows RuvC to scan DNA until it finds its consensus sequence, where it cleaves and resolves the cruciform DNA. The sequence is that of Holliday junction branch migration complex subunit RuvA from Streptococcus pyogenes serotype M49 (strain NZ131).